Reading from the N-terminus, the 414-residue chain is Protein PHLOEM PROTEIN 2-LIKE A10 (414 aa).

2 helical membrane-spanning segments follow: residues 20-40 (WLIFMAISGVSGYGAYKVYHL) and 379-399 (YVGAKSSVIITVCLALYLHII).

The protein resides in the membrane. The chain is Protein PHLOEM PROTEIN 2-LIKE A10 (PP2A10) from Arabidopsis thaliana (Mouse-ear cress).